The primary structure comprises 327 residues: Aspartate--ammonia ligase (327 aa).

The protein belongs to the class-II aminoacyl-tRNA synthetase family. AsnA subfamily.

It is found in the cytoplasm. It catalyses the reaction L-aspartate + NH4(+) + ATP = L-asparagine + AMP + diphosphate + H(+). It participates in amino-acid biosynthesis; L-asparagine biosynthesis; L-asparagine from L-aspartate (ammonia route): step 1/1. This Bacillus cereus (strain G9842) protein is Aspartate--ammonia ligase.